The chain runs to 294 residues: Nucleotide-binding protein CLD_1131 (294 aa).

8–15 (GLSGAGKT) contributes to the ATP binding site. 59 to 62 (DIRG) lines the GTP pocket.

Belongs to the RapZ-like family.

Displays ATPase and GTPase activities. This chain is Nucleotide-binding protein CLD_1131, found in Clostridium botulinum (strain Okra / Type B1).